Here is a 458-residue protein sequence, read N- to C-terminus: Lysine-rich nucleolar protein 1 (458 aa).

Residues 1-14 (MITKTHKVDLGLPE) show a composition bias toward basic and acidic residues. The disordered stretch occupies residues 1–21 (MITKTHKVDLGLPEKKKKKKV). A Glycyl lysine isopeptide (Lys-Gly) (interchain with G-Cter in SUMO2) cross-link involves residue Lys7. Ser42 and Ser50 each carry phosphoserine. A disordered region spans residues 46 to 305 (ATSPSKSVAH…ESGVAGDPWK (260 aa)). The span at 64–73 (VKKKKKKKKG) shows a compositional bias: basic residues. Lys101 participates in a covalent cross-link: Glycyl lysine isopeptide (Lys-Gly) (interchain with G-Cter in SUMO2). Ser111 carries the post-translational modification Phosphoserine. A Glycyl lysine isopeptide (Lys-Gly) (interchain with G-Cter in SUMO2) cross-link involves residue Lys130. Ser132 is modified (phosphoserine). Positions 145–155 (GKKLKKHKKEK) are enriched in basic residues. Basic and acidic residues predominate over residues 173–192 (EAREARDVGDTCSVGKKDEE). The span at 198–218 (QKRKRKSPREHNGKVKKKKKI) shows a compositional bias: basic residues. Residue Lys249 forms a Glycyl lysine isopeptide (Lys-Gly) (interchain with G-Cter in SUMO1); alternate linkage. Lys249 participates in a covalent cross-link: Glycyl lysine isopeptide (Lys-Gly) (interchain with G-Cter in SUMO2); alternate. Phosphoserine is present on Ser265. The segment covering 265-274 (SAKKKMKSKK) has biased composition (basic residues). Residues Lys275, Lys287, and Lys305 each participate in a glycyl lysine isopeptide (Lys-Gly) (interchain with G-Cter in SUMO2) cross-link. An interaction with ZNF106 region spans residues 306-458 (EETDTDLEVV…NASKSVKLED (153 aa)). A phosphothreonine mark is found at Thr308 and Thr310. Residues Lys319, Lys353, Lys373, Lys375, and Lys407 each participate in a glycyl lysine isopeptide (Lys-Gly) (interchain with G-Cter in SUMO2) cross-link. Residues 336–353 (QEEIDRESGKTEASETRK) are compositionally biased toward basic and acidic residues. The segment at 336 to 355 (QEEIDRESGKTEASETRKWT) is disordered. Arg430 carries the post-translational modification Omega-N-methylarginine. Lys442 participates in a covalent cross-link: Glycyl lysine isopeptide (Lys-Gly) (interchain with G-Cter in SUMO2).

Interacts with ZNF106.

The protein resides in the nucleus. It is found in the nucleolus. This chain is Lysine-rich nucleolar protein 1 (KNOP1), found in Homo sapiens (Human).